A 111-amino-acid chain; its full sequence is Gastrula zinc finger protein XlCGF32.1 (111 aa).

4 C2H2-type zinc fingers span residues 6–28, 34–56, 62–84, and 89–111; these read FDCT…FLCH, FVCV…LRIH, SVCP…MRIH, and FMCS…LQIH.

It belongs to the krueppel C2H2-type zinc-finger protein family.

The protein localises to the nucleus. Its function is as follows. May be involved in transcriptional regulation. This Xenopus laevis (African clawed frog) protein is Gastrula zinc finger protein XlCGF32.1.